We begin with the raw amino-acid sequence, 521 residues long: Bifunctional purine biosynthesis protein PurH (521 aa).

The 147-residue stretch at 1-147 folds into the MGS-like domain; it reads MAVIKRALIS…KNNRDVTVVV (147 aa).

It belongs to the PurH family.

The enzyme catalyses (6R)-10-formyltetrahydrofolate + 5-amino-1-(5-phospho-beta-D-ribosyl)imidazole-4-carboxamide = 5-formamido-1-(5-phospho-D-ribosyl)imidazole-4-carboxamide + (6S)-5,6,7,8-tetrahydrofolate. The catalysed reaction is IMP + H2O = 5-formamido-1-(5-phospho-D-ribosyl)imidazole-4-carboxamide. Its pathway is purine metabolism; IMP biosynthesis via de novo pathway; 5-formamido-1-(5-phospho-D-ribosyl)imidazole-4-carboxamide from 5-amino-1-(5-phospho-D-ribosyl)imidazole-4-carboxamide (10-formyl THF route): step 1/1. The protein operates within purine metabolism; IMP biosynthesis via de novo pathway; IMP from 5-formamido-1-(5-phospho-D-ribosyl)imidazole-4-carboxamide: step 1/1. This Syntrophotalea carbinolica (strain DSM 2380 / NBRC 103641 / GraBd1) (Pelobacter carbinolicus) protein is Bifunctional purine biosynthesis protein PurH.